Consider the following 278-residue polypeptide: Elongation factor Ts 1, mitochondrial (278 aa).

It belongs to the EF-Ts family.

Its subcellular location is the mitochondrion. In terms of biological role, associates with the EF-Tu.GDP complex and induces the exchange of GDP to GTP. It remains bound to the aminoacyl-tRNA.EF-Tu.GTP complex up to the GTP hydrolysis stage on the ribosome. The polypeptide is Elongation factor Ts 1, mitochondrial (Trypanosoma cruzi (strain CL Brener)).